The sequence spans 374 residues: Layilin (374 aa).

An N-terminal signal peptide occupies residues 1-24; the sequence is MQPGPALQAVLLAVLLSEPRSSKG. Residues 25–221 lie on the Extracellular side of the membrane; that stretch reads RLLSGQLVCR…TKETFKESRE (197 aa). The C-type lectin domain maps to 37–177; the sequence is TRRPCYKVIY…CNMKNNFICK (141 aa). 2 disulfide bridges follow: cysteine 63-cysteine 176 and cysteine 142-cysteine 168. Asparagine 109 carries N-linked (GlcNAc...) asparagine glycosylation. The interval 184–212 is disordered; sequence STTPSIRPGGEATEPPTPVLPEETQKEDT. Residues 222 to 242 form a helical membrane-spanning segment; sequence AALNLAYILIPSIPLFLLLVV. Residues 243–374 lie on the Cytoplasmic side of the membrane; that stretch reads TSAACWVWIC…SGWVENEIYY (132 aa). 2 positions are modified to phosphoserine: serine 279 and serine 292. Residues 323–367 are interaction with NF2; sequence DYDNMAVNPSESGFVTLASMESGFVTNDIYEFSPDRMGRSKESGW. Positions 330 to 374 are interaction with TLN1; the sequence is NPSESGFVTLASMESGFVTNDIYEFSPDRMGRSKESGWVENEIYY. 5 tandem repeats follow at residues 333 to 337, 343 to 347, 349 to 352, 364 to 368, and 370 to 373. Positions 333-368 are 3 X 5 AA repeats of E-S-G-X-V; the sequence is ESGFVTLASMESGFVTNDIYEFSPDRMGRSKESGWV. The 2 X 4 AA repeats of N-X-I-Y stretch occupies residues 349–373; the sequence is NDIYEFSPDRMGRSKESGWVENEIY.

As to quaternary structure, interacts with NF2 and RDX. Interacts with TLN1. Widely expressed. Abundant in the ovary.

The protein localises to the membrane. In terms of biological role, receptor for hyaluronate. The chain is Layilin (LAYN) from Cricetulus griseus (Chinese hamster).